The sequence spans 122 residues: Urease subunit beta (122 aa).

This sequence belongs to the urease beta subunit family. As to quaternary structure, heterotrimer of UreA (gamma), UreB (beta) and UreC (alpha) subunits. Three heterotrimers associate to form the active enzyme.

The protein localises to the cytoplasm. It carries out the reaction urea + 2 H2O + H(+) = hydrogencarbonate + 2 NH4(+). The protein operates within nitrogen metabolism; urea degradation; CO(2) and NH(3) from urea (urease route): step 1/1. In Acetivibrio thermocellus (strain ATCC 27405 / DSM 1237 / JCM 9322 / NBRC 103400 / NCIMB 10682 / NRRL B-4536 / VPI 7372) (Clostridium thermocellum), this protein is Urease subunit beta.